The chain runs to 451 residues: Transcription factor TGAL8 (451 aa).

Over residues 1–22 (MAYPSTSGMIQASSSLHGSITR) the composition is skewed to polar residues. 2 disordered regions span residues 1-32 (MAYPSTSGMIQASSSLHGSITRRNPEGYDMPS) and 70-151 (FPSQ…PKTL). Basic and acidic residues predominate over residues 141 to 150 (KGPKTPDPKT). The region spanning 147–191 (DPKTLRRLAQNREAARKSRLRKKAYIQQLETGRIRLAHLEQEIQF) is the bZIP domain. Residues 149–169 (KTLRRLAQNREAARKSRLRKK) form a basic motif region. Positions 175-189 (LETGRIRLAHLEQEI) are leucine-zipper. Positions 208-444 (AALFNLEYER…RALALFWTTT (237 aa)) constitute a DOG1 domain.

Belongs to the bZIP family. Interacts with NPR5/NH4, NH5.1 and NH5.2.

The protein localises to the nucleus. Transcriptional regulator involved in defense response. This is Transcription factor TGAL8 from Oryza sativa subsp. japonica (Rice).